Reading from the N-terminus, the 910-residue chain is Eukaryotic translation initiation factor 3 subunit C (910 aa).

Residues 1–21 (MSRFFANGSDSESESSEDEIQ) form a disordered region. Residues 11–20 (SESESSEDEI) are compositionally biased toward acidic residues. A phosphoserine mark is found at Ser-34, Ser-165, Ser-176, and Ser-185. The disordered stretch occupies residues 157–279 (FREAPDQESE…IRKRAEDDED (123 aa)). Residues 162 to 186 (DQESEAEDEVVALESDGGDAGDDSD) show a composition bias toward acidic residues. A compositionally biased stretch (low complexity) spans 188-207 (GVKPTEAAPKAVKTAPAKAA). The span at 209–235 (ADDDDSDDSIDWDSDSESETESSDDEN) shows a compositional bias: acidic residues. The span at 240–268 (MRERFLKRTTEKEEKDDDKRKDKRKEQKI) shows a compositional bias: basic and acidic residues. The PCI domain maps to 639–815 (FHMHINLELL…ETVVMHRSEP (177 aa)). The interval 847-910 (FFQRGNMGNR…QQQVQTIDEE (64 aa)) is disordered. The span at 862 to 874 (NRNQNNQGGNWLG) shows a compositional bias: low complexity. Residues 882–891 (RNRNQRGHHK) are compositionally biased toward basic residues. Residues 895–910 (DRQQQQQQQVQTIDEE) are compositionally biased toward low complexity.

This sequence belongs to the eIF-3 subunit C family. In terms of assembly, component of the eukaryotic translation initiation factor 3 (eIF-3) complex. The eIF-3 complex interacts with pix.

The protein localises to the cytoplasm. In terms of biological role, component of the eukaryotic translation initiation factor 3 (eIF-3) complex, which is involved in protein synthesis of a specialized repertoire of mRNAs and, together with other initiation factors, stimulates binding of mRNA and methionyl-tRNAi to the 40S ribosome. The eIF-3 complex specifically targets and initiates translation of a subset of mRNAs involved in cell proliferation. This is Eukaryotic translation initiation factor 3 subunit C from Drosophila erecta (Fruit fly).